We begin with the raw amino-acid sequence, 304 residues long: Porphobilinogen deaminase (304 aa).

Cys-240 carries the post-translational modification S-(dipyrrolylmethanemethyl)cysteine.

This sequence belongs to the HMBS family. Monomer. The cofactor is dipyrromethane.

The enzyme catalyses 4 porphobilinogen + H2O = hydroxymethylbilane + 4 NH4(+). It functions in the pathway porphyrin-containing compound metabolism; protoporphyrin-IX biosynthesis; coproporphyrinogen-III from 5-aminolevulinate: step 2/4. Its function is as follows. Tetrapolymerization of the monopyrrole PBG into the hydroxymethylbilane pre-uroporphyrinogen in several discrete steps. This is Porphobilinogen deaminase from Xanthomonas euvesicatoria pv. vesicatoria (strain 85-10) (Xanthomonas campestris pv. vesicatoria).